We begin with the raw amino-acid sequence, 476 residues long: Adenosylhomocysteinase (476 aa).

Residues threonine 65, aspartate 140, and glutamate 201 each contribute to the substrate site. 202 to 204 (TTT) is a binding site for NAD(+). Substrate is bound by residues lysine 231 and aspartate 235. NAD(+)-binding positions include asparagine 236, 265 to 270 (GYGDVG), glutamate 288, asparagine 323, 344 to 346 (IGH), and asparagine 392.

Belongs to the adenosylhomocysteinase family. The cofactor is NAD(+).

It is found in the cytoplasm. The enzyme catalyses S-adenosyl-L-homocysteine + H2O = L-homocysteine + adenosine. It functions in the pathway amino-acid biosynthesis; L-homocysteine biosynthesis; L-homocysteine from S-adenosyl-L-homocysteine: step 1/1. Functionally, may play a key role in the regulation of the intracellular concentration of adenosylhomocysteine. This is Adenosylhomocysteinase from Bacteroides thetaiotaomicron (strain ATCC 29148 / DSM 2079 / JCM 5827 / CCUG 10774 / NCTC 10582 / VPI-5482 / E50).